We begin with the raw amino-acid sequence, 193 residues long: uncharacterized protein (193 aa).

Disordered stretches follow at residues 1-67 (MSGP…GPRS) and 110-160 (QRTP…LPGS). Composition is skewed to low complexity over residues 50 to 64 (GPQR…ARPG) and 148 to 160 (AGAS…LPGS).

This is an uncharacterized protein from Homo sapiens (Human).